We begin with the raw amino-acid sequence, 205 residues long: LexA repressor (205 aa).

The H-T-H motif DNA-binding region spans 28–48 (VREIGEAVGLASSSTVHGHLA). Active-site for autocatalytic cleavage activity residues include Ser127 and Lys165.

This sequence belongs to the peptidase S24 family. In terms of assembly, homodimer. Following treatment with mitomycin C protein levels begin to decrease after a 5-min lag and do not return to their original levels for at least 90 minutes.

The catalysed reaction is Hydrolysis of Ala-|-Gly bond in repressor LexA.. In terms of biological role, represses dinA, dinB, dinC, recA genes and itself by binding to the 14 bp palindromic sequence 5'-CGAACNNNNGTTCG-3'; some genes have a tandem consensus sequence and their binding is cooperative. In the presence of single-stranded DNA, RecA interacts with LexA causing an autocatalytic cleavage which disrupts the DNA-binding part of LexA, leading to derepression of the SOS regulon and eventually DNA repair; autocleavage is maximal at pH 11 in the absence of RecA and ssDNA. This chain is LexA repressor, found in Bacillus subtilis (strain 168).